Reading from the N-terminus, the 382-residue chain is Galactokinase (382 aa).

Position 34-37 (34-37 (EHTD)) interacts with substrate. 124-130 (GAGLSSS) serves as a coordination point for ATP. Positions 130 and 162 each coordinate Mg(2+). The Proton acceptor role is filled by Asp174. A substrate-binding site is contributed by Tyr223.

It belongs to the GHMP kinase family. GalK subfamily.

Its subcellular location is the cytoplasm. The enzyme catalyses alpha-D-galactose + ATP = alpha-D-galactose 1-phosphate + ADP + H(+). Its pathway is carbohydrate metabolism; galactose metabolism. Its function is as follows. Catalyzes the transfer of the gamma-phosphate of ATP to D-galactose to form alpha-D-galactose-1-phosphate (Gal-1-P). The protein is Galactokinase of Escherichia coli O1:K1 / APEC.